A 361-amino-acid polypeptide reads, in one-letter code: tRNA-specific 2-thiouridylase MnmA (361 aa).

ATP contacts are provided by residues 8-15 (GMSGGVDS) and M34. An interaction with target base in tRNA region spans residues 94–96 (NPD). The active-site Nucleophile is the C99. C99 and C195 are oxidised to a cystine. G123 contacts ATP. Residues 145–147 (KDQ) form an interaction with tRNA region. The Cysteine persulfide intermediate role is filled by C195. Residues 307 to 308 (RY) form an interaction with tRNA region.

It belongs to the MnmA/TRMU family.

It localises to the cytoplasm. The catalysed reaction is S-sulfanyl-L-cysteinyl-[protein] + uridine(34) in tRNA + AH2 + ATP = 2-thiouridine(34) in tRNA + L-cysteinyl-[protein] + A + AMP + diphosphate + H(+). Its function is as follows. Catalyzes the 2-thiolation of uridine at the wobble position (U34) of tRNA, leading to the formation of s(2)U34. In Legionella pneumophila (strain Lens), this protein is tRNA-specific 2-thiouridylase MnmA.